The sequence spans 378 residues: Copper-containing nitrite reductase (378 aa).

The segment at residues 1–38 (MTEQLQMTRRTMLAGAALAGAVAPLLHTAQAHAAGAAA) is a signal peptide (tat-type signal). 2 consecutive Plastocyanin-like domains span residues 39–213 (AAGA…YDKI) and 214–378 (YYVG…PASM). 7 residues coordinate Cu cation: His-133, His-138, His-173, Cys-174, His-183, Met-188, and His-344.

Belongs to the multicopper oxidase family. In terms of assembly, homotrimer. The cofactor is Cu(+). It depends on Cu(2+) as a cofactor. FAD serves as cofactor. Post-translationally, predicted to be exported by the Tat system. The position of the signal peptide cleavage has been experimentally proven.

It is found in the periplasm. The enzyme catalyses nitric oxide + Fe(III)-[cytochrome c] + H2O = Fe(II)-[cytochrome c] + nitrite + 2 H(+). The protein operates within nitrogen metabolism; nitrate reduction (denitrification); dinitrogen from nitrate: step 2/4. In Achromobacter cycloclastes, this protein is Copper-containing nitrite reductase (nirK).